We begin with the raw amino-acid sequence, 82 residues long: RNA-binding protein Hfq (82 aa).

The Sm domain maps to 9 to 68 (DPFLNTLRKEHVPVSIYLVNGIKLQGKVDSFDQYVIMLKNTVSQMVYKHAISTIVPGRPV).

This sequence belongs to the Hfq family. In terms of assembly, homohexamer.

Its function is as follows. RNA chaperone that binds small regulatory RNA (sRNAs) and mRNAs to facilitate mRNA translational regulation in response to envelope stress, environmental stress and changes in metabolite concentrations. Also binds with high specificity to tRNAs. The chain is RNA-binding protein Hfq from Methylococcus capsulatus (strain ATCC 33009 / NCIMB 11132 / Bath).